Here is a 148-residue protein sequence, read N- to C-terminus: MVCRFSYVQVVLILVVLSVIISWANACSCFPPDETRQQKCRRADFVFLGRGYVTGIQQIGSFFYLRYCFLIDRVFKDRASSLNIPCALTNVESSYCGVRFERGRRYIVSGYLTRSGNQIGACEWNERWSNVPFLTRLQLFNDPQWCLP.

The N-terminal stretch at 1–26 (MVCRFSYVQVVLILVVLSVIISWANA) is a signal peptide. 3 disulfide bridges follow: Cys-27–Cys-96, Cys-29–Cys-122, and Cys-40–Cys-146. The NTR domain occupies 27–146 (CSCFPPDETR…LQLFNDPQWC (120 aa)).

In terms of tissue distribution, prismatic layer of shell (at protein level). Expressed primarily in the mantle with highest level in the mantle edge and lower level in the mantle pallium.

It localises to the secreted. The sequence is that of NTR domain-containing protein from Margaritifera margaritifera (Freshwater pearl mussel).